We begin with the raw amino-acid sequence, 377 residues long: MVTNRVDVFWHEGMLRHDAVEGVFDTGYDPGFLDVLEKHPENADRVRNMLSILRRGPIAPHVNWFTGLPAIVSELLMFHTSEYIEKLVEADKSGERCEIAAGTFMSPGSWEAALLAAGTTLSAMQHILDCHGKIAYALVRPPGHHSQPTQADGYCFLNNAALAVKLALNSGSCSRVAVIDIDVHYGNGTAEGFYTSDKVLTVSLHMNHGSWGSSHPQKGSIDELGEDVGLGYNLNVPLPNGTGDRGYEYAMNELVVPAVRRFGPDMVVLVVGQDSSAFDPNGRQSLTMNGYRRIGQIMRGVAEEHSHGRLLMVQEGGYHVTYAAYCLHAMLEGVLKIPEPHLSDPIAYYPEEEANAVAAVESIKTYHTEFVPFLRGT.

Residues 5 to 336 (RVDVFWHEGM…LHAMLEGVLK (332 aa)) are histone deacetylase. Histidine 145 functions as the Proton donor/acceptor in the catalytic mechanism. Zn(2+) is bound by residues aspartate 182, histidine 184, and aspartate 274.

The protein belongs to the histone deacetylase family. Zn(2+) serves as cofactor. As to expression, expressed in stems, leaves, flowers, siliques and mature seeds.

The protein localises to the nucleus. The protein resides in the cytoplasm. It carries out the reaction N(6)-acetyl-L-lysyl-[histone] + H2O = L-lysyl-[histone] + acetate. Its function is as follows. Responsible for the deacetylation of lysine residues on the N-terminal part of the core histones (H2A, H2B, H3 and H4). Histone deacetylation gives a tag for epigenetic repression and plays an important role in transcriptional regulation, cell cycle progression and developmental events. Histone deacetylases act via the formation of large multiprotein complexes. This is Histone deacetylase 8 from Arabidopsis thaliana (Mouse-ear cress).